The primary structure comprises 463 residues: ATP synthase subunit beta (463 aa).

An ATP-binding site is contributed by 152-159 (GGAGVGKT).

It belongs to the ATPase alpha/beta chains family. As to quaternary structure, F-type ATPases have 2 components, CF(1) - the catalytic core - and CF(0) - the membrane proton channel. CF(1) has five subunits: alpha(3), beta(3), gamma(1), delta(1), epsilon(1). CF(0) has three main subunits: a(1), b(2) and c(9-12). The alpha and beta chains form an alternating ring which encloses part of the gamma chain. CF(1) is attached to CF(0) by a central stalk formed by the gamma and epsilon chains, while a peripheral stalk is formed by the delta and b chains.

It is found in the cell inner membrane. The catalysed reaction is ATP + H2O + 4 H(+)(in) = ADP + phosphate + 5 H(+)(out). Produces ATP from ADP in the presence of a proton gradient across the membrane. The catalytic sites are hosted primarily by the beta subunits. This chain is ATP synthase subunit beta, found in Shewanella sp. (strain MR-7).